The primary structure comprises 252 residues: MYVIVASLNDPVSRIFLDVIAPTPLVKTEGNIEIRKFVDFPVVVYRGEPTDFSREDILASFGKYAIFISRHEMANPRPLFTVHTPGSWPDVSISNPPLTSSIFRTLCKLAYEPYTCAFEATHHTPNTSYISATFVEVGSTENEWKDRKAVETLAQAVEEVLNSQIKPNTPAMAIGDLHYVTVTDPVLKGELDLGHVIPKYVDISLQVVQNAYLKHTTPIERAILFKKNVKNPARSEIIEFLKSRGVEIITKG.

The protein belongs to the DtdA deacylase family. Monomer. Requires Zn(2+) as cofactor.

It catalyses the reaction a D-aminoacyl-tRNA + H2O = a tRNA + a D-alpha-amino acid + H(+). It carries out the reaction glycyl-tRNA(Ala) + H2O = tRNA(Ala) + glycine + H(+). D-aminoacyl-tRNA deacylase with broad substrate specificity. By recycling D-aminoacyl-tRNA to D-amino acids and free tRNA molecules, this enzyme counteracts the toxicity associated with the formation of D-aminoacyl-tRNA entities in vivo. The chain is D-aminoacyl-tRNA deacylase from Pyrobaculum islandicum (strain DSM 4184 / JCM 9189 / GEO3).